Here is a 179-residue protein sequence, read N- to C-terminus: Inner membrane-spanning protein YciB (179 aa).

Helical transmembrane passes span 22 to 42 (IYAATAALIVATAIVLIYSWV), 50 to 70 (MALITFVLVVVFGGLTLFFHN), 76 to 96 (WKVTVIYALFAGALLVSQWVM), 121 to 141 (LAWAVFFILCGLANIYIAFWL), and 149 to 169 (FKVFGLTALTLIFTLLSGVYI).

The protein belongs to the YciB family.

Its subcellular location is the cell inner membrane. Its function is as follows. Plays a role in cell envelope biogenesis, maintenance of cell envelope integrity and membrane homeostasis. This Escherichia fergusonii (strain ATCC 35469 / DSM 13698 / CCUG 18766 / IAM 14443 / JCM 21226 / LMG 7866 / NBRC 102419 / NCTC 12128 / CDC 0568-73) protein is Inner membrane-spanning protein YciB.